A 509-amino-acid polypeptide reads, in one-letter code: Cytochrome P450 monooxygenase fumoA (509 aa).

A helical membrane pass occupies residues 5–27; sequence LANLNFPYLILSACLSAILLSRF. N-linked (GlcNAc...) asparagine glycans are attached at residues Asn317, Asn369, and Asn378. Cys456 provides a ligand contact to heme. Asn464 is a glycosylation site (N-linked (GlcNAc...) asparagine).

It belongs to the cytochrome P450 family. The cofactor is heme.

The protein localises to the membrane. Its pathway is secondary metabolite biosynthesis. Functionally, cytochrome P450 monooxygenase; part of the gene cluster that mediates the biosynthesis of fumosorinone, a 2-pyridone alkaloid that acts as an inhibitor of protein tyrosine phosphatase 1B which is implicated asa negative regulator of insulin receptor signaling and a potential drug target for the treatment of type II diabetes and other associated metabolic syndromes. The polyketide-amino acid backbone of fumosorinone is first assembled by the PKS-NRPS hybrid fumoS. The PKS modules condense one acetyl-CoA starter unit with 7 malonyl-CoA units, programmed C-methylations occurring after the first 3 and the sixth extensions, and cycles of full reduction occurring after the first 2 extensions. Because fumoS lacks a designated enoyl reductase (ER) domain, the required activity is provided the enoyl reductase fumoC. Upon formation of the polyketide backbone on the thiotemplate, the polyketide is transferred to the NRPS module and linked to tyrosine to produce the acyltetramic acid intermediate called prefumosorinone A. The cytochrome P450 monooxygenase fumoA then probably catalyzes an unprecedented oxidative ring expansion of prefumosorinone A to form prefumosorinone B which contains the 2-pyridone core of fumosorinone. The cytochrome P450 monooxygenase fumoB might hydroxylate the nitrogen of prefumosorinone B, but not the acyltetramic acid prefumosorinone A, to form fumosorinone. This is Cytochrome P450 monooxygenase fumoA from Cordyceps fumosorosea (strain ARSEF 2679) (Isaria fumosorosea).